We begin with the raw amino-acid sequence, 88 residues long: Small ribosomal subunit protein bS20 (88 aa).

Belongs to the bacterial ribosomal protein bS20 family.

Binds directly to 16S ribosomal RNA. The protein is Small ribosomal subunit protein bS20 of Clostridium botulinum (strain 657 / Type Ba4).